The chain runs to 149 residues: Large ribosomal subunit protein bL9 (149 aa).

The protein belongs to the bacterial ribosomal protein bL9 family.

Binds to the 23S rRNA. The sequence is that of Large ribosomal subunit protein bL9 from Aliivibrio fischeri (strain ATCC 700601 / ES114) (Vibrio fischeri).